A 287-amino-acid chain; its full sequence is Bifunctional protein FolD (287 aa).

Residues 160–162 (GRS), S189, and T230 each bind NADP(+).

This sequence belongs to the tetrahydrofolate dehydrogenase/cyclohydrolase family. As to quaternary structure, homodimer.

It carries out the reaction (6R)-5,10-methylene-5,6,7,8-tetrahydrofolate + NADP(+) = (6R)-5,10-methenyltetrahydrofolate + NADPH. It catalyses the reaction (6R)-5,10-methenyltetrahydrofolate + H2O = (6R)-10-formyltetrahydrofolate + H(+). Its pathway is one-carbon metabolism; tetrahydrofolate interconversion. In terms of biological role, catalyzes the oxidation of 5,10-methylenetetrahydrofolate to 5,10-methenyltetrahydrofolate and then the hydrolysis of 5,10-methenyltetrahydrofolate to 10-formyltetrahydrofolate. The chain is Bifunctional protein FolD from Chlamydia trachomatis serovar D (strain ATCC VR-885 / DSM 19411 / UW-3/Cx).